A 250-amino-acid chain; its full sequence is ATP synthase subunit a (250 aa).

Transmembrane regions (helical) follow at residues 29-49 (ASLF…FATS), 84-104 (FFPL…LGMF), 114-134 (IIVT…YGFY), 143-163 (VFVP…IEII), 193-213 (FVAS…LPLI), and 216-236 (VALT…FAVL).

It belongs to the ATPase A chain family. F-type ATPases have 2 components, CF(1) - the catalytic core - and CF(0) - the membrane proton channel. CF(1) has five subunits: alpha(3), beta(3), gamma(1), delta(1), epsilon(1). CF(0) has three main subunits: a(1), b(2) and c(9-12). The alpha and beta chains form an alternating ring which encloses part of the gamma chain. CF(1) is attached to CF(0) by a central stalk formed by the gamma and epsilon chains, while a peripheral stalk is formed by the delta and b chains.

It is found in the cell inner membrane. In terms of biological role, key component of the proton channel; it plays a direct role in the translocation of protons across the membrane. The polypeptide is ATP synthase subunit a (Rhizobium johnstonii (strain DSM 114642 / LMG 32736 / 3841) (Rhizobium leguminosarum bv. viciae)).